The chain runs to 269 residues: Oligoribonuclease, mitochondrial (269 aa).

The Exonuclease domain maps to 55 to 227 (LVWIDCEMTG…SDIKESIAQL (173 aa)). Y184 is a catalytic residue. The tract at residues 240–269 (ETESVESIGSEQPESPSSSTSSLKRQRTDF) is disordered. A compositionally biased stretch (low complexity) spans 245–261 (ESIGSEQPESPSSSTSS).

This sequence belongs to the oligoribonuclease family.

Its subcellular location is the mitochondrion. 3'-to-5' exoribonuclease specific for small oligoribonucleotides. This Saccharomyces cerevisiae (strain ATCC 204508 / S288c) (Baker's yeast) protein is Oligoribonuclease, mitochondrial (REX2).